The chain runs to 390 residues: Delta-aminolevulinic acid dehydratase, chloroplastic (390 aa).

A chloroplast-targeting transit peptide spans 1 to 24; the sequence is MQMMQRNVVGQRPVAGSRRSLVVA. Residues 34 to 69 are disordered; the sequence is VSTNGKHRTGVPEGTPIVTPQDLPSRPRRNRRSESF. The Schiff-base intermediate with substrate role is filled by Lys251. 5-aminolevulinate is bound by residues Arg261 and Lys281. Glu297 lines the Mg(2+) pocket. The active-site Schiff-base intermediate with substrate is Lys312. Residues Ser338 and Tyr377 each contribute to the 5-aminolevulinate site.

This sequence belongs to the ALAD family. In terms of assembly, homooctamer. Mg(2+) serves as cofactor.

The protein localises to the plastid. It is found in the chloroplast. The catalysed reaction is 2 5-aminolevulinate = porphobilinogen + 2 H2O + H(+). It participates in porphyrin-containing compound metabolism; protoporphyrin-IX biosynthesis; coproporphyrinogen-III from 5-aminolevulinate: step 1/4. Its function is as follows. Catalyzes an early step in the biosynthesis of tetrapyrroles. Binds two molecules of 5-aminolevulinate per subunit, each at a distinct site, and catalyzes their condensation to form porphobilinogen. The polypeptide is Delta-aminolevulinic acid dehydratase, chloroplastic (HEMB) (Chlamydomonas reinhardtii (Chlamydomonas smithii)).